Reading from the N-terminus, the 233-residue chain is Thymidylate kinase (233 aa).

Residue 10 to 17 (GVDGVGKT) participates in ATP binding.

The protein belongs to the thymidylate kinase family.

It carries out the reaction dTMP + ATP = dTDP + ADP. In terms of biological role, phosphorylation of dTMP to form dTDP in both de novo and salvage pathways of dTTP synthesis. The chain is Thymidylate kinase from Bifidobacterium longum subsp. infantis (strain ATCC 15697 / DSM 20088 / JCM 1222 / NCTC 11817 / S12).